A 174-amino-acid chain; its full sequence is Early nodulin-11 (174 aa).

The first 25 residues, 1 to 25 (MASFFLYSLGLVFLSALTLVPLGLA), serve as a signal peptide directing secretion. The interval 28 to 174 (SPSHNMPPNP…GNQPPPSIHF (147 aa)) is disordered. The span at 53-65 (YNPPIYKPPPTYK) shows a compositional bias: pro residues. Residues 70–83 (KQPINKSPNKKPLL) are compositionally biased toward low complexity. Over residues 122 to 132 (PQKKPPSRKRP) the composition is skewed to basic residues. 2 stretches are compositionally biased toward pro residues: residues 134–150 (NTPP…PVNK) and 159–174 (KRPP…SIHF).

Belongs to the plant proline-rich protein superfamily. As to expression, expressed in cotyledons, leaf vasculature, stomatal guard cells and trichomes. In the embryo, expressed in embryo suspensors, the epidermis and underlying tissues of the cotyledons, hypocotyls, and radicle in maturing embryos, and the outer cell layer of the endosperm.

It is found in the secreted. It localises to the cell wall. In terms of biological role, involved in the infection process during the plant-rhizobium interaction. Involved in actinorhizal root nodulation. Involved in symbiotic association with the nitrogen-fixing actinomycete Frankia spp. In Medicago truncatula (Barrel medic), this protein is Early nodulin-11.